The following is a 336-amino-acid chain: N-acetyl-gamma-glutamyl-phosphate reductase (336 aa).

Cysteine 148 is an active-site residue.

Belongs to the NAGSA dehydrogenase family. Type 1 subfamily.

It is found in the cytoplasm. It catalyses the reaction N-acetyl-L-glutamate 5-semialdehyde + phosphate + NADP(+) = N-acetyl-L-glutamyl 5-phosphate + NADPH + H(+). Its pathway is amino-acid biosynthesis; L-arginine biosynthesis; N(2)-acetyl-L-ornithine from L-glutamate: step 3/4. In terms of biological role, catalyzes the NADPH-dependent reduction of N-acetyl-5-glutamyl phosphate to yield N-acetyl-L-glutamate 5-semialdehyde. This chain is N-acetyl-gamma-glutamyl-phosphate reductase, found in Campylobacter curvus (strain 525.92).